Consider the following 368-residue polypeptide: RNA polymerase sigma factor SigA (368 aa).

The disordered stretch occupies residues 60–86; it reads VVDENGDPSEHSLKKDEKEAEKAQAED. Residues 67–84 show a composition bias toward basic and acidic residues; that stretch reads PSEHSLKKDEKEAEKAQA. Positions 135–205 are sigma-70 factor domain-2; the sequence is LAEANLRLVV…TRAIADQART (71 aa). An Interaction with polymerase core subunit RpoC motif is present at residues 159–162; sequence DLIQ. The sigma-70 factor domain-3 stretch occupies residues 214–290; sequence ETINKLIRIQ…DQDATSPAEH (77 aa). A sigma-70 factor domain-4 region spans residues 303–356; that stretch reads VLDTLTDREENVLRLRFGLDDGRTRTLEEVGKVFGVTRERIRQIEAKALRKLRH. A DNA-binding region (H-T-H motif) is located at residues 329-348; the sequence is LEEVGKVFGVTRERIRQIEA.

This sequence belongs to the sigma-70 factor family. RpoD/SigA subfamily. Interacts transiently with the RNA polymerase catalytic core.

Its subcellular location is the cytoplasm. Functionally, sigma factors are initiation factors that promote the attachment of RNA polymerase to specific initiation sites and are then released. This sigma factor is the primary sigma factor during exponential growth. The chain is RNA polymerase sigma factor SigA from Enterococcus faecalis (strain ATCC 700802 / V583).